We begin with the raw amino-acid sequence, 393 residues long: S-adenosylmethionine synthase 1 (393 aa).

Glutamate 9 provides a ligand contact to Mg(2+). Histidine 15 lines the ATP pocket. Glutamate 43 contacts K(+). L-methionine-binding residues include glutamate 56 and glutamine 99. Residues 167 to 169, 235 to 238, aspartate 246, 252 to 253, alanine 269, lysine 273, and lysine 277 contribute to the ATP site; these read DGK, SGRF, and RK. Residue aspartate 246 participates in L-methionine binding. Lysine 277 is a binding site for L-methionine.

Belongs to the AdoMet synthase family. As to quaternary structure, homotetramer. It depends on Mn(2+) as a cofactor. Requires Mg(2+) as cofactor. Co(2+) serves as cofactor. The cofactor is K(+). Mostly expressed in stems.

The protein localises to the cytoplasm. It carries out the reaction L-methionine + ATP + H2O = S-adenosyl-L-methionine + phosphate + diphosphate. Its pathway is amino-acid biosynthesis; S-adenosyl-L-methionine biosynthesis; S-adenosyl-L-methionine from L-methionine: step 1/1. In terms of biological role, catalyzes the formation of S-adenosylmethionine from methionine and ATP. The reaction comprises two steps that are both catalyzed by the same enzyme: formation of S-adenosylmethionine (AdoMet) and triphosphate, and subsequent hydrolysis of the triphosphate. This chain is S-adenosylmethionine synthase 1 (SAM1), found in Solanum lycopersicum (Tomato).